Reading from the N-terminus, the 1083-residue chain is Carbamoyl phosphate synthase large chain (1083 aa).

The segment at 1-402 (MPKRTDIRKV…AYMKALRSME (402 aa)) is carboxyphosphate synthetic domain. Positions 129, 169, 175, 176, 208, 210, 215, 241, 242, 243, 285, and 299 each coordinate ATP. An ATP-grasp 1 domain is found at 133–328 (KAAMQKIGVA…IAKIAAKLAL (196 aa)). Q285, E299, and N301 together coordinate Mg(2+). Residues Q285, E299, and N301 each coordinate Mn(2+). Residues 403–554 (LGRVGLESPE…YSTYEEEDEA (152 aa)) are oligomerization domain. The carbamoyl phosphate synthetic domain stretch occupies residues 555–937 (PPTDRQKVLI…AFAKSQLAAG (383 aa)). Residues 679 to 871 (AALIEKLGLK…MAKIAALCMV (193 aa)) enclose the ATP-grasp 2 domain. ATP contacts are provided by R715, R754, L756, E761, G787, V788, H789, S790, Q830, and E842. Q830, E842, and N844 together coordinate Mg(2+). The Mn(2+) site is built by Q830, E842, and N844. One can recognise an MGS-like domain in the interval 938–1078 (VKLPKSGKVF…QEYLGINAAP (141 aa)). The tract at residues 938–1083 (VKLPKSGKVF…INAAPPGTRR (146 aa)) is allosteric domain.

It belongs to the CarB family. In terms of assembly, composed of two chains; the small (or glutamine) chain promotes the hydrolysis of glutamine to ammonia, which is used by the large (or ammonia) chain to synthesize carbamoyl phosphate. Tetramer of heterodimers (alpha,beta)4. Mg(2+) serves as cofactor. Requires Mn(2+) as cofactor.

The enzyme catalyses hydrogencarbonate + L-glutamine + 2 ATP + H2O = carbamoyl phosphate + L-glutamate + 2 ADP + phosphate + 2 H(+). The catalysed reaction is hydrogencarbonate + NH4(+) + 2 ATP = carbamoyl phosphate + 2 ADP + phosphate + 2 H(+). The protein operates within amino-acid biosynthesis; L-arginine biosynthesis; carbamoyl phosphate from bicarbonate: step 1/1. Its pathway is pyrimidine metabolism; UMP biosynthesis via de novo pathway; (S)-dihydroorotate from bicarbonate: step 1/3. Large subunit of the glutamine-dependent carbamoyl phosphate synthetase (CPSase). CPSase catalyzes the formation of carbamoyl phosphate from the ammonia moiety of glutamine, carbonate, and phosphate donated by ATP, constituting the first step of 2 biosynthetic pathways, one leading to arginine and/or urea and the other to pyrimidine nucleotides. The large subunit (synthetase) binds the substrates ammonia (free or transferred from glutamine from the small subunit), hydrogencarbonate and ATP and carries out an ATP-coupled ligase reaction, activating hydrogencarbonate by forming carboxy phosphate which reacts with ammonia to form carbamoyl phosphate. This is Carbamoyl phosphate synthase large chain from Myxococcus xanthus (strain DK1622).